Here is a 47-residue protein sequence, read N- to C-terminus: Large ribosomal subunit protein bL33A (47 aa).

The protein belongs to the bacterial ribosomal protein bL33 family.

This chain is Large ribosomal subunit protein bL33A, found in Staphylococcus aureus (strain JH1).